The primary structure comprises 745 residues: Putative cryptochrome DASH, mitochondrial (745 aa).

The transit peptide at 1–22 directs the protein to the mitochondrion; the sequence is MAPSKVVIYAMRRELRLSDNPI. The Photolyase/cryptochrome alpha/beta domain maps to 23-166; it reads FHHLSNPESK…DFKLWDDEKY (144 aa). Disordered stretches follow at residues 563-688 and 702-745; these read KFNL…GGGG and GGYR…QTDA. A compositionally biased stretch (basic residues) spans 571 to 584; it reads SKVKKRPFFRKRGT. The span at 591–603 shows a compositional bias: low complexity; sequence GSAESPGSSDSHS. Gly residues predominate over residues 604-616; that stretch reads GSGGSPDGSGGGN. Positions 632-648 are enriched in low complexity; it reads QQTHQGSGRSQSSSNHG. 2 stretches are compositionally biased toward gly residues: residues 672-688 and 702-718; these read RGGG…GGGG and GGYR…GGFR. A compositionally biased stretch (polar residues) spans 735–745; sequence QQVASQFQTDA.

This sequence belongs to the DNA photolyase class-1 family. It depends on FAD as a cofactor. (6R)-5,10-methylene-5,6,7,8-tetrahydrofolate serves as cofactor.

It localises to the mitochondrion. In terms of biological role, may have a photoreceptor function. The polypeptide is Putative cryptochrome DASH, mitochondrial (cry) (Neurospora crassa (strain ATCC 24698 / 74-OR23-1A / CBS 708.71 / DSM 1257 / FGSC 987)).